The chain runs to 937 residues: Isoleucine--tRNA ligase (937 aa).

The 'HIGH' region signature appears at 58-68 (PYANGSIHIGH). Glu-561 is an L-isoleucyl-5'-AMP binding site. The 'KMSKS' region signature appears at 602–606 (KMSKS). ATP is bound at residue Lys-605. Zn(2+) contacts are provided by Cys-900, Cys-903, Cys-920, and Cys-923.

Belongs to the class-I aminoacyl-tRNA synthetase family. IleS type 1 subfamily. In terms of assembly, monomer. Zn(2+) is required as a cofactor.

The protein localises to the cytoplasm. It catalyses the reaction tRNA(Ile) + L-isoleucine + ATP = L-isoleucyl-tRNA(Ile) + AMP + diphosphate. In terms of biological role, catalyzes the attachment of isoleucine to tRNA(Ile). As IleRS can inadvertently accommodate and process structurally similar amino acids such as valine, to avoid such errors it has two additional distinct tRNA(Ile)-dependent editing activities. One activity is designated as 'pretransfer' editing and involves the hydrolysis of activated Val-AMP. The other activity is designated 'posttransfer' editing and involves deacylation of mischarged Val-tRNA(Ile). In Pectobacterium atrosepticum (strain SCRI 1043 / ATCC BAA-672) (Erwinia carotovora subsp. atroseptica), this protein is Isoleucine--tRNA ligase.